The following is a 659-amino-acid chain: Exoribonuclease 2 (659 aa).

In terms of domain architecture, RNB spans 189 to 532 (RRDLTALHFV…NHRLIKACLA (344 aa)). Positions 577 to 659 (NPEFRAEVQD…ETRSLIGNLV (83 aa)) constitute an S1 motif domain.

Belongs to the RNR ribonuclease family. RNase II subfamily.

It is found in the cytoplasm. The catalysed reaction is Exonucleolytic cleavage in the 3'- to 5'-direction to yield nucleoside 5'-phosphates.. In terms of biological role, involved in mRNA degradation. Hydrolyzes single-stranded polyribonucleotides processively in the 3' to 5' direction. This chain is Exoribonuclease 2, found in Mannheimia succiniciproducens (strain KCTC 0769BP / MBEL55E).